Here is a 301-residue protein sequence, read N- to C-terminus: Rhodopsin (301 aa).

At 1-18 the chain is on the extracellular side; the sequence is LHMIHLHWYQYPPMNPMM. The chain crosses the membrane as a helical span at residues 19–43; it reads YPLLLIFMLFTGILCLAGNFVTIWV. At 44–55 the chain is on the cytoplasmic side; that stretch reads FMNTKSLRTPAN. A helical transmembrane segment spans residues 56 to 78; it reads LLVVNLAMSDFLMMFTMFPPMMV. Over 79–92 the chain is Extracellular; it reads TCYYHTWTLGPTFC. A disulfide bridge connects residues C92 and C169. Residues 93–115 form a helical membrane-spanning segment; the sequence is QVYGFLGNLCGCASIWTMVFITF. Residues 116–118 carry the 'Ionic lock' involved in activated form stabilization motif; the sequence is DRY. The Cytoplasmic portion of the chain corresponds to 116-134; the sequence is DRYNVIVKGVAGEPLSTKK. A helical transmembrane segment spans residues 135–155; the sequence is ASLWILIVWVLSLAWCMAPFF. The Extracellular segment spans residues 156 to 182; it reads GWNRYVPEGNLTGCGTDYLSEDILSRS. A glycan (N-linked (GlcNAc...) asparagine) is linked at N165. A helical membrane pass occupies residues 183-204; sequence YLYIYSTWVYFLPLTITIYCYV. At 205 to 245 the chain is on the cytoplasmic side; it reads FIIKAVAAHEKGMRDQAKKMGIKSLRNEEAQKTSAECRLAK. The chain crosses the membrane as a helical span at residues 246-267; sequence IAMTTVALWFIAWTPYLLINWV. The Extracellular portion of the chain corresponds to 268–278; it reads GMFARSYLSPV. The chain crosses the membrane as a helical span at residues 279–300; sequence YTIWGYVFAKANAVYNPIVYAI. N6-(retinylidene)lysine is present on K288.

It belongs to the G-protein coupled receptor 1 family. Opsin subfamily. As to quaternary structure, homodimer. Interacts with GNAQ. Contains one covalently linked retinal chromophore.

Its subcellular location is the cell projection. The protein resides in the rhabdomere membrane. Functionally, photoreceptor required for image-forming vision at low light intensity. Can use both retinal and 3-dehydroretinal as visual pigment. Light-induced isomerization of 11-cis to all-trans retinal triggers a conformational change that activates signaling via G-proteins. Signaling via GNAQ probably mediates the activation of phospholipase C. The protein is Rhodopsin (RHO) of Procambarus milleri (Miami cave crayfish).